The sequence spans 268 residues: Ribosomal RNA small subunit methyltransferase A (268 aa).

Positions 23, 25, 50, 72, 97, and 116 each coordinate S-adenosyl-L-methionine.

The protein belongs to the class I-like SAM-binding methyltransferase superfamily. rRNA adenine N(6)-methyltransferase family. RsmA subfamily.

Its subcellular location is the cytoplasm. The catalysed reaction is adenosine(1518)/adenosine(1519) in 16S rRNA + 4 S-adenosyl-L-methionine = N(6)-dimethyladenosine(1518)/N(6)-dimethyladenosine(1519) in 16S rRNA + 4 S-adenosyl-L-homocysteine + 4 H(+). Its function is as follows. Specifically dimethylates two adjacent adenosines (A1518 and A1519) in the loop of a conserved hairpin near the 3'-end of 16S rRNA in the 30S particle. May play a critical role in biogenesis of 30S subunits. In Rickettsia bellii (strain RML369-C), this protein is Ribosomal RNA small subunit methyltransferase A.